A 308-amino-acid polypeptide reads, in one-letter code: MSEQHSLNPFESGSVTASDVAAAKSGAEDLVNTLTAHTVHPSTELPSATSFPSALPNSENPVIQNISSSSSEPHHTSQSTPGETSSPVCPVSGAHGGADKKCPALEAGCPFTNTTKQNVDPEISNALWSVLTWKNTSCSFSTLMSILALVYVPSWINLPRLFFRTFRYVFLITSIIEFGGLFASNGKRGVLSHFRSSYITCDSKALDRIVNSIVDIFNVMLIQFQRILFAESPILTFTASVAAFIEFFLSGFLSYKSLFVWNVLFAFILPRLYVCNERSIKHLVASLERSGDKLKKQATETINTTVNK.

Polar residues-rich tracts occupy residues 1 to 17 (MSEQ…SVTA) and 41 to 66 (PSTE…IQNI). 2 disordered regions span residues 1–22 (MSEQ…DVAA) and 41–92 (PSTE…CPVS). An N-linked (GlcNAc...) asparagine glycan is attached at N65. Low complexity predominate over residues 67 to 81 (SSSSSEPHHTSQSTP). N-linked (GlcNAc...) asparagine glycans are attached at residues N113 and N135. The 182-residue stretch at 127–308 (LWSVLTWKNT…TETINTTVNK (182 aa)) folds into the Reticulon domain. 4 consecutive transmembrane segments (helical) span residues 138-158 (CSFS…WINL), 166-186 (FRYV…ASNG), 233-253 (PILT…SGFL), and 255-275 (YKSL…LYVC). N303 carries N-linked (GlcNAc...) asparagine glycosylation.

Interacts with TTS1 and YOP1.

The protein resides in the endoplasmic reticulum membrane. It localises to the nucleus membrane. Required for the correct positioning of the cellular division plane by delimiting the actomyosin ring assembly at the cell equator. Overexpression causes cell lysis. This is Reticulon-like protein 1 (rtn1) from Schizosaccharomyces pombe (strain 972 / ATCC 24843) (Fission yeast).